Reading from the N-terminus, the 400-residue chain is Argininosuccinate synthase (400 aa).

8 to 16 (AYSGGLDTS) lines the ATP pocket. L-citrulline is bound at residue Tyr87. Gly117 serves as a coordination point for ATP. 3 residues coordinate L-aspartate: Thr119, Asn123, and Asp124. Asn123 contacts L-citrulline. Residues Arg127, Ser175, Glu260, and Tyr272 each contribute to the L-citrulline site.

Belongs to the argininosuccinate synthase family. Type 1 subfamily. Homotetramer.

Its subcellular location is the cytoplasm. It carries out the reaction L-citrulline + L-aspartate + ATP = 2-(N(omega)-L-arginino)succinate + AMP + diphosphate + H(+). Its pathway is amino-acid biosynthesis; L-arginine biosynthesis; L-arginine from L-ornithine and carbamoyl phosphate: step 2/3. The chain is Argininosuccinate synthase from Mycolicibacterium gilvum (strain PYR-GCK) (Mycobacterium gilvum (strain PYR-GCK)).